A 339-amino-acid polypeptide reads, in one-letter code: MTRTITPDMTDDDLLEATLRPKSLDDYVGQEKAKGNLRVFIEAARGRGEALDHVLLYGPPGLGKTTLANIIACEMGVNIKSTSGPVIERPGDLAAILTNLETHDVLFIDEIHRLSHVVEEILYPAMEDFQLDIIIGQGPSARTIKLDLPKFTLVGATTRAGLLSSPLRDRFGVISRLEFYTIEELAFIITRSARILGMEIKPEGATELARRSRGTPRIANRLLRRVRDFAQVKADGVITLNVVQDALALLEIDHMGFDYMDRMILLTIIDKFGGGPVGLDTIAAAISEESDTIEDVYEPFLIQNGFLNRTPRGRVATRAAYEHFGRIVPEPPQGKLFQD.

The interval 1–180 (MTRTITPDMT…FGVISRLEFY (180 aa)) is large ATPase domain (RuvB-L). ATP contacts are provided by residues Leu19, Arg20, Gly61, Lys64, Thr65, Thr66, 127–129 (EDF), Arg170, Tyr180, and Arg217. Thr65 is a Mg(2+) binding site. The interval 181–251 (TIEELAFIIT…VVQDALALLE (71 aa)) is small ATPAse domain (RuvB-S). A head domain (RuvB-H) region spans residues 254–339 (HMGFDYMDRM…EPPQGKLFQD (86 aa)). 2 residues coordinate DNA: Arg309 and Arg314.

Belongs to the RuvB family. In terms of assembly, homohexamer. Forms an RuvA(8)-RuvB(12)-Holliday junction (HJ) complex. HJ DNA is sandwiched between 2 RuvA tetramers; dsDNA enters through RuvA and exits via RuvB. An RuvB hexamer assembles on each DNA strand where it exits the tetramer. Each RuvB hexamer is contacted by two RuvA subunits (via domain III) on 2 adjacent RuvB subunits; this complex drives branch migration. In the full resolvosome a probable DNA-RuvA(4)-RuvB(12)-RuvC(2) complex forms which resolves the HJ.

The protein resides in the cytoplasm. It catalyses the reaction ATP + H2O = ADP + phosphate + H(+). Its function is as follows. The RuvA-RuvB-RuvC complex processes Holliday junction (HJ) DNA during genetic recombination and DNA repair, while the RuvA-RuvB complex plays an important role in the rescue of blocked DNA replication forks via replication fork reversal (RFR). RuvA specifically binds to HJ cruciform DNA, conferring on it an open structure. The RuvB hexamer acts as an ATP-dependent pump, pulling dsDNA into and through the RuvAB complex. RuvB forms 2 homohexamers on either side of HJ DNA bound by 1 or 2 RuvA tetramers; 4 subunits per hexamer contact DNA at a time. Coordinated motions by a converter formed by DNA-disengaged RuvB subunits stimulates ATP hydrolysis and nucleotide exchange. Immobilization of the converter enables RuvB to convert the ATP-contained energy into a lever motion, pulling 2 nucleotides of DNA out of the RuvA tetramer per ATP hydrolyzed, thus driving DNA branch migration. The RuvB motors rotate together with the DNA substrate, which together with the progressing nucleotide cycle form the mechanistic basis for DNA recombination by continuous HJ branch migration. Branch migration allows RuvC to scan DNA until it finds its consensus sequence, where it cleaves and resolves cruciform DNA. This chain is Holliday junction branch migration complex subunit RuvB, found in Geotalea daltonii (strain DSM 22248 / JCM 15807 / FRC-32) (Geobacter daltonii).